The following is a 101-amino-acid chain: Urease subunit beta (101 aa).

It belongs to the urease beta subunit family. In terms of assembly, heterotrimer of UreA (gamma), UreB (beta) and UreC (alpha) subunits. Three heterotrimers associate to form the active enzyme.

It localises to the cytoplasm. It carries out the reaction urea + 2 H2O + H(+) = hydrogencarbonate + 2 NH4(+). Its pathway is nitrogen metabolism; urea degradation; CO(2) and NH(3) from urea (urease route): step 1/1. The chain is Urease subunit beta from Jannaschia sp. (strain CCS1).